The chain runs to 104 residues: DNA-directed RNA polymerase subunit omega (104 aa).

The interval 53–104 (EIESGNVTIHPDPEGKREAVRRRIEEEKRRKEEEEKKIKEQIAKEKEDGEKI) is disordered. The segment covering 63–104 (PDPEGKREAVRRRIEEEKRRKEEEEKKIKEQIAKEKEDGEKI) has biased composition (basic and acidic residues).

The protein belongs to the RNA polymerase subunit omega family. As to quaternary structure, the RNAP catalytic core consists of 2 alpha, 1 beta, 1 beta' and 1 omega subunit. When a sigma factor is associated with the core the holoenzyme is formed, which can initiate transcription.

The enzyme catalyses RNA(n) + a ribonucleoside 5'-triphosphate = RNA(n+1) + diphosphate. Promotes RNA polymerase assembly. Latches the N- and C-terminal regions of the beta' subunit thereby facilitating its interaction with the beta and alpha subunits. The chain is DNA-directed RNA polymerase subunit omega from Streptococcus pneumoniae serotype 2 (strain D39 / NCTC 7466).